The primary structure comprises 569 residues: Dicarboxylate transporter 1, chloroplastic (569 aa).

A chloroplast-targeting transit peptide spans 1–93; the sequence is MASMALSLTS…VPSPAPVSAP (93 aa). Over residues 23-74 the composition is skewed to low complexity; it reads SLKPLSKSQPSISLPSLRSNASKSPSLSHKHFLSPPSLLLPHKLKPISASSP. Residues 23 to 93 form a disordered region; sequence SLKPLSKSQP…VPSPAPVSAP (71 aa). A compositionally biased stretch (pro residues) spans 75–90; that stretch reads TNPPPPPAPVPSPAPV. 12 helical membrane-spanning segments follow: residues 106–126, 134–154, 172–192, 241–261, 268–288, 317–337, 367–387, 388–408, 423–443, 450–470, 490–510, and 543–563; these read PLLASILTGVIIWFIPTPEGV, LAIFLSTIVGIITQPLPLGAV, AAFSAFGDPIPWLIALAFFFA, AGGIFLPLVKSLCIACGSNVG, LGAWLMLTCFQTSVISSSMFL, AAFVPGLVSLIVVPLLLYVVY, IMAVTLLLTVGLWVFGGKLGV, DAVTAAILGLSVLLITGVVTW, WFAALIAMAGYLNKYGLITWF, VVGGLGLSWQMSFGVLVLLYF, FLSVASALGTPPFLAAIVLSF, and YGFLISIVNLIIWLGVGGLWW.

This sequence belongs to the SLC13A/DASS transporter (TC 2.A.47) family. DIT1 subfamily. As to quaternary structure, monomer. In terms of processing, the N-terminus is blocked. As to expression, expressed in leaves.

The protein resides in the plastid. It localises to the chloroplast inner membrane. 2-oxoglutarate/malate translocator that transports carbon skeletons into chloroplasts for net glutamate synthesis. This translocator exchanges malate for internal succinate, fumarate and 2-oxoglutarate but not for aspartate and glutamate. Involved with DIT2 in primary ammonia assimilation and in the re-assimilation of ammonia generated by the photorespiratory pathway. Imports 2-oxoglutarate into plastids as precursor for ammonia assimilation. 2-oxoglutarate is converted to glutamate, the end product of ammonia assimilation, which is exported to the cytosol by DIT2. The chain is Dicarboxylate transporter 1, chloroplastic (DIT1) from Spinacia oleracea (Spinach).